The following is a 475-amino-acid chain: Glycogen synthase (475 aa).

Lys-15 provides a ligand contact to ADP-alpha-D-glucose.

It belongs to the glycosyltransferase 1 family. Bacterial/plant glycogen synthase subfamily.

The enzyme catalyses [(1-&gt;4)-alpha-D-glucosyl](n) + ADP-alpha-D-glucose = [(1-&gt;4)-alpha-D-glucosyl](n+1) + ADP + H(+). The protein operates within glycan biosynthesis; glycogen biosynthesis. Functionally, synthesizes alpha-1,4-glucan chains using ADP-glucose. This is Glycogen synthase from Kosmotoga olearia (strain ATCC BAA-1733 / DSM 21960 / TBF 19.5.1).